The chain runs to 292 residues: 4-hydroxy-tetrahydrodipicolinate synthase (292 aa).

Residue Thr45 participates in pyruvate binding. The active-site Proton donor/acceptor is the Tyr133. Lys161 (schiff-base intermediate with substrate) is an active-site residue. Ile203 is a binding site for pyruvate.

It belongs to the DapA family. In terms of assembly, homotetramer; dimer of dimers.

It is found in the cytoplasm. The catalysed reaction is L-aspartate 4-semialdehyde + pyruvate = (2S,4S)-4-hydroxy-2,3,4,5-tetrahydrodipicolinate + H2O + H(+). Its pathway is amino-acid biosynthesis; L-lysine biosynthesis via DAP pathway; (S)-tetrahydrodipicolinate from L-aspartate: step 3/4. Its function is as follows. Catalyzes the condensation of (S)-aspartate-beta-semialdehyde [(S)-ASA] and pyruvate to 4-hydroxy-tetrahydrodipicolinate (HTPA). This Vibrio cholerae serotype O1 (strain M66-2) protein is 4-hydroxy-tetrahydrodipicolinate synthase.